Reading from the N-terminus, the 428-residue chain is CRISPR system endoribonuclease Csm6 (428 aa).

The segment at 1 to 145 is CARF domain; that stretch reads MKILISAVGT…RANREYTALT (145 aa). Positions 146 to 428 are HEPN domain; sequence ESEIDALIME…QNKELIKMLE (283 aa).

It belongs to the CRISPR-associated Csm6 family. In terms of assembly, homodimer. The composite ssRNase active site is formed at the dimer interface.

With respect to regulation, non-specific ssRNase activity is allosterically activated about 1000-fold by cyclic hexaadenylate (cA6), a second messenger produced by Cas10 of the ternary Csm effector complex in the presence of a cognate target RNA. ssRNase activity is inhibited by physiological concentrations of ATP (1 mM), activity is restored by cOA. CRISPR (clustered regularly interspaced short palindromic repeat) is an adaptive immune system that provides protection against mobile genetic elements (viruses, transposable elements and conjugative plasmids). CRISPR clusters contain spacers, sequences complementary to antecedent mobile elements, and target invading nucleic acids. CRISPR clusters are transcribed and processed into CRISPR RNA (crRNA). The type III-A Csm complex binds crRNA and acts as a crRNA-guided RNase, DNase and cyclic oligoadenylate synthase; binding of target RNA cognate to the crRNA is required for all activities. In a heterologous host this Csm effector complex restricts ssRNA phage MS2, suggesting it may target RNA viruses in vivo. This protein is not part of the Csm complex. Its function is as follows. Csm functions as a non-specific ssDNase. Base-pairing between crRNA and target RNA to form a ternary Csm complex activates a ssDNase activity; target RNA cleavage suppresses the ssDNase, a temporal control that prevents uncontrolled DNA degradation. Viral RNA transcripts probably tether the Csm complex to the viral genome, recruiting Cas10 ssDNA activity which is able to degrade DNA in the transcription bubble, spatially controlling the DNase activity. Functionally, a single-strand-specific endoribonuclease (ssRNase) that is approximately 1000-fold stimulated by cyclic oligoadenylate (cOA); although several species of cOA are synthesized by this organism only cyclic hexaadenylate (cA6) stimulates the ssRNase activity. Cleaves preferentially within GA or AA dinucleotides, although the presence of cA6 broadens the preference. Linear oligoadenylates do not activate the RNase. This Streptococcus thermophilus protein is CRISPR system endoribonuclease Csm6.